The chain runs to 461 residues: UDP-N-acetylmuramoylalanine--D-glutamate ligase (461 aa).

An ATP-binding site is contributed by 117–123; it reads GTNGKTT.

This sequence belongs to the MurCDEF family.

It is found in the cytoplasm. It carries out the reaction UDP-N-acetyl-alpha-D-muramoyl-L-alanine + D-glutamate + ATP = UDP-N-acetyl-alpha-D-muramoyl-L-alanyl-D-glutamate + ADP + phosphate + H(+). It participates in cell wall biogenesis; peptidoglycan biosynthesis. In terms of biological role, cell wall formation. Catalyzes the addition of glutamate to the nucleotide precursor UDP-N-acetylmuramoyl-L-alanine (UMA). The sequence is that of UDP-N-acetylmuramoylalanine--D-glutamate ligase from Synechococcus sp. (strain CC9605).